A 250-amino-acid chain; its full sequence is 7-cyano-7-deazaguanine synthase (250 aa).

ATP is bound at residue 21–31; it reads FSGGQDSSVCL. Positions 209, 224, 227, and 230 each coordinate Zn(2+).

Belongs to the QueC family. Requires Zn(2+) as cofactor.

It catalyses the reaction 7-carboxy-7-deazaguanine + NH4(+) + ATP = 7-cyano-7-deazaguanine + ADP + phosphate + H2O + H(+). Its pathway is purine metabolism; 7-cyano-7-deazaguanine biosynthesis. Its function is as follows. Catalyzes the ATP-dependent conversion of 7-carboxy-7-deazaguanine (CDG) to 7-cyano-7-deazaguanine (preQ(0)). This chain is 7-cyano-7-deazaguanine synthase, found in Caulobacter sp. (strain K31).